Reading from the N-terminus, the 363-residue chain is UDP-N-acetylglucosamine--N-acetylmuramyl-(pentapeptide) pyrophosphoryl-undecaprenol N-acetylglucosamine transferase (363 aa).

UDP-N-acetyl-alpha-D-glucosamine is bound by residues 10 to 12 (TGG), Asn124, Ser195, Ile248, and Gln293.

It belongs to the glycosyltransferase 28 family. MurG subfamily.

The protein localises to the cell membrane. The catalysed reaction is Mur2Ac(oyl-L-Ala-gamma-D-Glu-L-Lys-D-Ala-D-Ala)-di-trans,octa-cis-undecaprenyl diphosphate + UDP-N-acetyl-alpha-D-glucosamine = beta-D-GlcNAc-(1-&gt;4)-Mur2Ac(oyl-L-Ala-gamma-D-Glu-L-Lys-D-Ala-D-Ala)-di-trans,octa-cis-undecaprenyl diphosphate + UDP + H(+). It participates in cell wall biogenesis; peptidoglycan biosynthesis. Functionally, cell wall formation. Catalyzes the transfer of a GlcNAc subunit on undecaprenyl-pyrophosphoryl-MurNAc-pentapeptide (lipid intermediate I) to form undecaprenyl-pyrophosphoryl-MurNAc-(pentapeptide)GlcNAc (lipid intermediate II). This Lacticaseibacillus casei (strain BL23) (Lactobacillus casei) protein is UDP-N-acetylglucosamine--N-acetylmuramyl-(pentapeptide) pyrophosphoryl-undecaprenol N-acetylglucosamine transferase.